The sequence spans 291 residues: Nucleotide-binding protein Athe_0320 (291 aa).

9–16 (GMSGAGKS) is a binding site for ATP. 60–63 (DIRG) contributes to the GTP binding site.

The protein belongs to the RapZ-like family.

Displays ATPase and GTPase activities. In Caldicellulosiruptor bescii (strain ATCC BAA-1888 / DSM 6725 / KCTC 15123 / Z-1320) (Anaerocellum thermophilum), this protein is Nucleotide-binding protein Athe_0320.